The following is a 238-amino-acid chain: uncharacterized protein (238 aa).

This is an uncharacterized protein from Frog virus 3 (isolate Goorha) (FV-3).